The sequence spans 216 residues: CsgBAC operon transcriptional regulatory protein (216 aa).

The 66-residue stretch at 149 to 214 (NSTESALLTH…QAVSWANDNL (66 aa)) folds into the HTH luxR-type domain. Residues 173-192 (NNEIARSLFISENTVKTHLY) constitute a DNA-binding region (H-T-H motif).

The protein resides in the cell inner membrane. Functionally, the master regulator for adhesive curli fimbriae expression; necessary for transcription of the csgBAC/ymdA operon. Plays a positive role in biofilm formation. May have the capability to respond to starvation and/or high cell density by activating csgBA transcription. Low-level constitutive expression confers an adherent curli fimbriae-expressing phenotype, up-regulates 10 genes and down-regulates 14 others. The chain is CsgBAC operon transcriptional regulatory protein (csgD) from Escherichia coli (strain K12).